The sequence spans 92 residues: DNA-directed RNA polymerase subunit Rpo11 (92 aa).

Belongs to the archaeal Rpo11/eukaryotic RPB11/RPC19 RNA polymerase subunit family. As to quaternary structure, part of the RNA polymerase complex.

The protein localises to the cytoplasm. It catalyses the reaction RNA(n) + a ribonucleoside 5'-triphosphate = RNA(n+1) + diphosphate. DNA-dependent RNA polymerase (RNAP) catalyzes the transcription of DNA into RNA using the four ribonucleoside triphosphates as substrates. This chain is DNA-directed RNA polymerase subunit Rpo11, found in Methanosarcina mazei (strain ATCC BAA-159 / DSM 3647 / Goe1 / Go1 / JCM 11833 / OCM 88) (Methanosarcina frisia).